A 276-amino-acid chain; its full sequence is Bifunctional protein FolD (276 aa).

Residues 158 to 160 (NRS), serine 183, and isoleucine 224 contribute to the NADP(+) site.

The protein belongs to the tetrahydrofolate dehydrogenase/cyclohydrolase family. Homodimer.

It catalyses the reaction (6R)-5,10-methylene-5,6,7,8-tetrahydrofolate + NADP(+) = (6R)-5,10-methenyltetrahydrofolate + NADPH. The catalysed reaction is (6R)-5,10-methenyltetrahydrofolate + H2O = (6R)-10-formyltetrahydrofolate + H(+). The protein operates within one-carbon metabolism; tetrahydrofolate interconversion. Catalyzes the oxidation of 5,10-methylenetetrahydrofolate to 5,10-methenyltetrahydrofolate and then the hydrolysis of 5,10-methenyltetrahydrofolate to 10-formyltetrahydrofolate. This is Bifunctional protein FolD from Picrophilus torridus (strain ATCC 700027 / DSM 9790 / JCM 10055 / NBRC 100828 / KAW 2/3).